The following is a 120-amino-acid chain: Seripauperin-4 (120 aa).

The chain crosses the membrane as a helical span at residues 7-24; the sequence is IAAGVAAIAATASATTTI.

This sequence belongs to the SRP1/TIP1 family. Seripauperin subfamily.

The protein localises to the membrane. This Saccharomyces cerevisiae (strain ATCC 204508 / S288c) (Baker's yeast) protein is Seripauperin-4 (PAU4).